The sequence spans 324 residues: MIRSVMCGVGSALPKKKLSNDEIAKFVETSDSWIVQRTGIHQRYIASENETTVSLGIEAAQVALTNAGMTIKDIDCIILATSTPNRTFPSSAVEIQHALGMSHGFSFDVQAVCSGFIFALTIGDVYLRSGEAKRVLVIGSETFSRILDWKDRTTCVLFGDGAGAAILEAREVEGNVAIDRGILSTKLRSNGAHIDKLYADGGPSTTQTIGYLRMKGQEVFKHAVGIVTDVIDDCFAAVGMNPSQLDWFVPHQANKRIIEASAKKLGIKTDKVVITVDQHGNTSAASVPLALATAVQDGRIKEGDLVLLEAMGGGFTWGAVLIRW.

Residues C113 and H251 contribute to the active site. Positions 252–256 (QANKR) are ACP-binding. N281 is a catalytic residue.

This sequence belongs to the thiolase-like superfamily. FabH family. Homodimer.

Its subcellular location is the cytoplasm. It catalyses the reaction malonyl-[ACP] + acetyl-CoA + H(+) = 3-oxobutanoyl-[ACP] + CO2 + CoA. It participates in lipid metabolism; fatty acid biosynthesis. Catalyzes the condensation reaction of fatty acid synthesis by the addition to an acyl acceptor of two carbons from malonyl-ACP. Catalyzes the first condensation reaction which initiates fatty acid synthesis and may therefore play a role in governing the total rate of fatty acid production. Possesses both acetoacetyl-ACP synthase and acetyl transacylase activities. Its substrate specificity determines the biosynthesis of branched-chain and/or straight-chain of fatty acids. The sequence is that of Beta-ketoacyl-[acyl-carrier-protein] synthase III from Bartonella bacilliformis (strain ATCC 35685 / KC583 / Herrer 020/F12,63).